The chain runs to 593 residues: Class E vacuolar protein-sorting machinery protein HSE1 (593 aa).

Residues 15–144 form the VHS domain; it reads ATSDELTSEN…SLKSQDAVAE (130 aa). The tract at residues 136-251 is disordered; the sequence is LKSQDAVAED…AQPLSAATPP (116 aa). Basic and acidic residues predominate over residues 151–171; sequence PPREPTSEQLRAEDEELRRAL. A UIM domain is found at 162 to 181; that stretch reads AEDEELRRALELSIQDQGGR. Positions 175-193 are enriched in polar residues; it reads IQDQGGRNAWPSYNTEQAE. Low complexity predominate over residues 194–227; that stretch reads TSGSSAPAAASSSSSAYQPTSQSLAPAQQQQQQQ. Positions 232 to 241 are enriched in polar residues; it reads HTNGTSSSAH. The SH3 domain occupies 252–311; that stretch reads AVASRVRALYDFSPTEPGELAFSRGEVIRVLDSVYEHWWRGEVRGEAGIFPVNYVEVLPD. The segment at 474–593 is disordered; the sequence is RHGYAQSAGA…SSYASHPTGH (120 aa). A compositionally biased stretch (polar residues) spans 504 to 521; sequence QQITMAHQQQPHEQQYSS. Positions 523-539 are enriched in basic and acidic residues; the sequence is PHDDEKRRLFERARAES. Residues 540-552 are compositionally biased toward low complexity; it reads EAFQQQHFQSQAH. Residues 566-593 show a composition bias toward polar residues; sequence PDASVLNQQMGNMNIGGSSSYASHPTGH.

The protein belongs to the STAM family. Component of the ESCRT-0 complex composed of HSE1 and VPS27.

Its subcellular location is the endosome membrane. Component of the ESCRT-0 complex which is the sorting receptor for ubiquitinated cargo proteins at the multivesicular body (MVB). This chain is Class E vacuolar protein-sorting machinery protein HSE1 (HSE1), found in Mycosarcoma maydis (Corn smut fungus).